Reading from the N-terminus, the 410-residue chain is Chloroacetanilide N-alkylformylase, ferredoxin reductase component (410 aa).

Gly-14, Asp-36, Lys-49, Val-82, Arg-130, Asp-279, and Val-298 together coordinate FAD.

It belongs to the FAD-dependent oxidoreductase family. In terms of assembly, the chloroacetanilide N-alkylformylase multicomponent enzyme system is composed of an oxygenase component (CndA) and an electron transfer component formed by a ferredoxin reductase (CndC1) and a ferredoxin (CndB1). In vitro, chloroacetanilide N-alkylformylase assays in which CndB1 is substituted for CndB2 demonstrate that the two enzymes possess nearly identical activities. The cofactor is FAD.

It carries out the reaction 2 reduced [2Fe-2S]-[ferredoxin] + NAD(+) + H(+) = 2 oxidized [2Fe-2S]-[ferredoxin] + NADH. Functionally, component of the chloroacetanilide N-alkylformylase multicomponent enzyme system involved in the degradation of chloroacetanilide herbicides (N-alkoxyalkyl-N-chloroacetyl-substituted aniline derivatives). In vitro, catalyzes the transfers of electrons from ferredoxin (CndB1) to NADH. N-dealkylase utilizes NADH, but not NADPH, as the electron donor. The sequence is that of Chloroacetanilide N-alkylformylase, ferredoxin reductase component from Rhizorhabdus wittichii (strain DC-6 / KACC 16600) (Sphingomonas wittichii).